Consider the following 455-residue polypeptide: Zinc finger protein ZPR1 homolog (455 aa).

C4-type zinc fingers lie at residues 28-60 and 247-279; these read CPVCEEDGETRIMCTSIPYYRAVILMSFECPHC and CPNCHGPTEVKMKPTDIPFFQTVIIMSLACDRC.

Belongs to the ZPR1 family.

It is found in the nucleus. The protein is Zinc finger protein ZPR1 homolog of Caenorhabditis elegans.